The primary structure comprises 78 residues: UPF0235 protein AF_2072 (78 aa).

It belongs to the UPF0235 family.

The sequence is that of UPF0235 protein AF_2072 from Archaeoglobus fulgidus (strain ATCC 49558 / DSM 4304 / JCM 9628 / NBRC 100126 / VC-16).